The primary structure comprises 238 residues: Ribonuclease 3 (238 aa).

Residues 4–127 form the RNase III domain; that stretch reads IEEFEKRLGY…TMGAIYLETG (124 aa). Position 40 (E40) interacts with Mg(2+). D44 is a catalytic residue. N113 and E116 together coordinate Mg(2+). E116 is an active-site residue. The DRBM domain maps to 154–223; the sequence is DYKTALQELT…ARIALEIFHR (70 aa).

It belongs to the ribonuclease III family. Homodimer. Mg(2+) is required as a cofactor.

Its subcellular location is the cytoplasm. It catalyses the reaction Endonucleolytic cleavage to 5'-phosphomonoester.. Its function is as follows. Digests double-stranded RNA. Involved in the processing of primary rRNA transcript to yield the immediate precursors to the large and small rRNAs (23S and 16S). Processes some mRNAs, and tRNAs when they are encoded in the rRNA operon. Processes pre-crRNA and tracrRNA of type II CRISPR loci if present in the organism. This Wolinella succinogenes (strain ATCC 29543 / DSM 1740 / CCUG 13145 / JCM 31913 / LMG 7466 / NCTC 11488 / FDC 602W) (Vibrio succinogenes) protein is Ribonuclease 3.